Reading from the N-terminus, the 172-residue chain is Large ribosomal subunit protein uL10 (172 aa).

The protein belongs to the universal ribosomal protein uL10 family. In terms of assembly, part of the ribosomal stalk of the 50S ribosomal subunit. The N-terminus interacts with L11 and the large rRNA to form the base of the stalk. The C-terminus forms an elongated spine to which L12 dimers bind in a sequential fashion forming a multimeric L10(L12)X complex.

In terms of biological role, forms part of the ribosomal stalk, playing a central role in the interaction of the ribosome with GTP-bound translation factors. The sequence is that of Large ribosomal subunit protein uL10 from Nitrobacter winogradskyi (strain ATCC 25391 / DSM 10237 / CIP 104748 / NCIMB 11846 / Nb-255).